The primary structure comprises 205 residues: Protein GrpE (205 aa).

The protein belongs to the GrpE family. In terms of assembly, homodimer.

It localises to the cytoplasm. Participates actively in the response to hyperosmotic and heat shock by preventing the aggregation of stress-denatured proteins, in association with DnaK and GrpE. It is the nucleotide exchange factor for DnaK and may function as a thermosensor. Unfolded proteins bind initially to DnaJ; upon interaction with the DnaJ-bound protein, DnaK hydrolyzes its bound ATP, resulting in the formation of a stable complex. GrpE releases ADP from DnaK; ATP binding to DnaK triggers the release of the substrate protein, thus completing the reaction cycle. Several rounds of ATP-dependent interactions between DnaJ, DnaK and GrpE are required for fully efficient folding. The protein is Protein GrpE of Shewanella loihica (strain ATCC BAA-1088 / PV-4).